A 331-amino-acid polypeptide reads, in one-letter code: Outer membrane lipoprotein PM1514 (331 aa).

The signal sequence occupies residues 1–20 (MQYFDIKKSLPVFCSLLITA). The N-palmitoyl cysteine moiety is linked to residue Cys21. Cys21 carries S-diacylglycerol cysteine lipidation.

It is found in the cell outer membrane. The protein localises to the cell surface. This Pasteurella multocida (strain Pm70) protein is Outer membrane lipoprotein PM1514.